Consider the following 765-residue polypeptide: Putative maltooligosyl trehalose synthase (765 aa).

It belongs to the glycosyl hydrolase 13 family. In terms of assembly, monomer.

It carries out the reaction 4-[(1-&gt;4)-alpha-D-glucosyl](n-1)-D-glucose = 1-[(1-&gt;4)-alpha-D-glucosyl](n-1)-alpha-D-glucose. Its function is as follows. Catalyzes the conversion of maltooligosaccharide into the non-reducing saccharide, maltooligosyl trehalose (alpha-maltooligosyl alpha-D-glucoside) by intramolecular transglycosylation. The sequence is that of Putative maltooligosyl trehalose synthase (treY) from Mycobacterium tuberculosis (strain CDC 1551 / Oshkosh).